The chain runs to 257 residues: MNKKILNFIKKKNKTKIISLTAYSKNIASIIDRHCDLVLVGDSLGSVLYSFSSTKKVTLDMMIEHSKSVRMGVKKSLMVVDMPHNTYRNSKEALSNAKKIISKTKCDAIKLEGGKKVIQIIKTLIKNKIPVMGHLGVLPQSATNFKFKGKEIAERKIILRDSKLLEDAGVFSIVLECVESSLAKEITKTVKVPTIGIGASVHCDGQVLVTDDLIGLNKIKARFVKRYSNIEKQINDAALKFKKDVIRSKFPTKKHSY.

2 residues coordinate Mg(2+): Asp-42 and Asp-81. 3-methyl-2-oxobutanoate contacts are provided by residues 42-43 (DS), Asp-81, and Lys-110. Position 112 (Glu-112) interacts with Mg(2+). Glu-176 functions as the Proton acceptor in the catalytic mechanism.

It belongs to the PanB family. In terms of assembly, homodecamer; pentamer of dimers. Requires Mg(2+) as cofactor.

Its subcellular location is the cytoplasm. It catalyses the reaction 3-methyl-2-oxobutanoate + (6R)-5,10-methylene-5,6,7,8-tetrahydrofolate + H2O = 2-dehydropantoate + (6S)-5,6,7,8-tetrahydrofolate. Its pathway is cofactor biosynthesis; (R)-pantothenate biosynthesis; (R)-pantoate from 3-methyl-2-oxobutanoate: step 1/2. Catalyzes the reversible reaction in which hydroxymethyl group from 5,10-methylenetetrahydrofolate is transferred onto alpha-ketoisovalerate to form ketopantoate. This chain is 3-methyl-2-oxobutanoate hydroxymethyltransferase, found in Pelagibacter ubique (strain HTCC1062).